Reading from the N-terminus, the 338-residue chain is RNA 3'-terminal phosphate cyclase (338 aa).

ATP-binding positions include Gln103 and Tyr283–Gln287. The active-site Tele-AMP-histidine intermediate is His308.

The protein belongs to the RNA 3'-terminal cyclase family. Type 1 subfamily.

Its subcellular location is the cytoplasm. It carries out the reaction a 3'-end 3'-phospho-ribonucleotide-RNA + ATP = a 3'-end 2',3'-cyclophospho-ribonucleotide-RNA + AMP + diphosphate. In terms of biological role, catalyzes the conversion of 3'-phosphate to a 2',3'-cyclic phosphodiester at the end of RNA. The mechanism of action of the enzyme occurs in 3 steps: (A) adenylation of the enzyme by ATP; (B) transfer of adenylate to an RNA-N3'P to produce RNA-N3'PP5'A; (C) and attack of the adjacent 2'-hydroxyl on the 3'-phosphorus in the diester linkage to produce the cyclic end product. The biological role of this enzyme is unknown but it is likely to function in some aspects of cellular RNA processing. The sequence is that of RNA 3'-terminal phosphate cyclase from Escherichia coli (strain SMS-3-5 / SECEC).